A 593-amino-acid polypeptide reads, in one-letter code: Glutamate decarboxylase 1 (593 aa).

Low complexity predominate over residues Met-1–Ser-12. The interval Met-1 to Asn-22 is disordered. Residue Ser-77 is modified to Phosphoserine. Gln-189 to Ser-191 serves as a coordination point for 4-aminobutanoate. An N6-(pyridoxal phosphate)lysine modification is found at Lys-404. Position 566 (Arg-566) interacts with 4-aminobutanoate.

The protein belongs to the group II decarboxylase family. As to quaternary structure, homodimer. Pyridoxal 5'-phosphate is required as a cofactor.

It catalyses the reaction L-glutamate + H(+) = 4-aminobutanoate + CO2. Functionally, catalyzes the synthesis of the inhibitory neurotransmitter gamma-aminobutyric acid (GABA) with pyridoxal 5'-phosphate as cofactor. The chain is Glutamate decarboxylase 1 (Gad1) from Mus musculus (Mouse).